The following is a 548-amino-acid chain: Chaperonin GroEL (548 aa).

ATP is bound by residues 30–33 (TLGP), Lys51, 87–91 (DGTTT), Gly415, and Asp496. Positions 527 to 548 (SDKEDAMPPMRGGMGGMGGMDF) are disordered. A compositionally biased stretch (gly residues) spans 538–548 (GGMGGMGGMDF).

Belongs to the chaperonin (HSP60) family. In terms of assembly, forms a cylinder of 14 subunits composed of two heptameric rings stacked back-to-back. Interacts with the co-chaperonin GroES.

It localises to the cytoplasm. The catalysed reaction is ATP + H2O + a folded polypeptide = ADP + phosphate + an unfolded polypeptide.. Together with its co-chaperonin GroES, plays an essential role in assisting protein folding. The GroEL-GroES system forms a nano-cage that allows encapsulation of the non-native substrate proteins and provides a physical environment optimized to promote and accelerate protein folding. In Rickettsia akari (strain Hartford), this protein is Chaperonin GroEL.